Consider the following 426-residue polypeptide: Zinc finger CCCH domain-containing protein 13 (426 aa).

The C3H1-type zinc-finger motif lies at 10–36 (AYKTKLCALWQRGNCNRDTCSFAHGHG). Disordered stretches follow at residues 34-155 (GHGD…HEKQ), 253-317 (NEEG…DKTS), and 390-426 (NDAD…VDVE). Basic and acidic residues-rich tracts occupy residues 54 to 70 (RRDY…DRRF), 78 to 101 (PGRE…RDSS), and 108 to 120 (RKSE…KTDD). Residues 124-133 (NSSRSLSLSD) are compositionally biased toward low complexity. The segment covering 135–155 (NDEKKKDKFSSGDEKEDHEKQ) has biased composition (basic and acidic residues). Residues 144 to 245 (SSGDEKEDHE…FERLGDLLAS (102 aa)) adopt a coiled-coil conformation. Polar residues predominate over residues 255 to 272 (EGSSVNEDLNERSPNTAA). The span at 284–317 (EEAKAVKKRRERDSDTMTRSDKYRSDVTDFDKTS) shows a compositional bias: basic and acidic residues. The segment covering 416–426 (YEGDDEEVDVE) has biased composition (acidic residues).

In Oryza sativa subsp. japonica (Rice), this protein is Zinc finger CCCH domain-containing protein 13.